The primary structure comprises 593 residues: MLO-like protein 8 (593 aa).

Residues 1 to 46 (MGIIDGSLLRRLICLCLWCLLGGGVTVVTAEDEKKVVHKQLNQTPT) are Extracellular-facing. The helical transmembrane segment at 47 to 67 (WAVAAVCTFFIVVSVLLEKLL) threads the bilayer. Topologically, residues 68-92 (HKVGKVLWDRHKTALLDALEKIKAE) are cytoplasmic. A helical membrane pass occupies residues 93–113 (LMVLGFISLLLTFGQTYILDI). The Extracellular segment spans residues 114–181 (CIPSHVARTM…ISAEALHQLH (68 aa)). The chain crosses the membrane as a helical span at residues 182 to 202 (ILIFFLAIFHVLYSFLTMMLG). Over 203–304 (RLKIRGWKHW…IKRSLEDDFK (102 aa)) the chain is Cytoplasmic. Residues 305–325 (VVVGVSPVLWGSFVLFLLLNI) form a helical membrane-spanning segment. Asp-326 is a topological domain (extracellular). The chain crosses the membrane as a helical span at residues 327–347 (GFKMMFIGTAIPVIIILAVGT). Residues 348 to 393 (KLQAIMTRMALGITDRHAVVQGMPLVQGNDEYFWFGRPHLILHLMH) are Cytoplasmic-facing. A helical membrane pass occupies residues 394-414 (FALFQNAFQITYFFWIWYSFG). Residues 415–430 (SDSCYHPNFKIALVKV) lie on the Extracellular side of the membrane. Residues 431–451 (AIALGVLCLCSYITLPLYALV) form a helical membrane-spanning segment. Residues 452–593 (TQMGSRMKKS…APSNESSQDR (142 aa)) are Cytoplasmic-facing. Positions 465–486 (EQTSKALKKWRMAVKKKKGVKA) are calmodulin-binding. The interval 481-593 (KKGVKATTKR…APSNESSQDR (113 aa)) is disordered. Residues 489–512 (KRLGGDGSASPTASTVRSTSSVRS) show a composition bias toward low complexity. Positions 528–539 (LDPETSDLDTDN) are enriched in acidic residues. Positions 567 to 579 (TSRDTETDSKEFS) are enriched in basic and acidic residues.

Belongs to the MLO family.

The protein localises to the membrane. May be involved in modulation of pathogen defense and leaf cell death. Activity seems to be regulated by Ca(2+)-dependent calmodulin binding and seems not to require heterotrimeric G proteins. This is MLO-like protein 8 (MLO8) from Arabidopsis thaliana (Mouse-ear cress).